Here is a 370-residue protein sequence, read N- to C-terminus: Queuine tRNA-ribosyltransferase (370 aa).

Asp-93 serves as the catalytic Proton acceptor. Residues 93–97 (DSGGF), Asp-147, Gln-189, and Gly-216 contribute to the substrate site. The interval 247–253 (GVGSPDC) is RNA binding. Asp-266 acts as the Nucleophile in catalysis. Positions 271 to 275 (TRIAR) are RNA binding; important for wobble base 34 recognition. Residues Cys-304, Cys-306, Cys-309, and His-335 each contribute to the Zn(2+) site.

The protein belongs to the queuine tRNA-ribosyltransferase family. In terms of assembly, homodimer. Within each dimer, one monomer is responsible for RNA recognition and catalysis, while the other monomer binds to the replacement base PreQ1. It depends on Zn(2+) as a cofactor.

The catalysed reaction is 7-aminomethyl-7-carbaguanine + guanosine(34) in tRNA = 7-aminomethyl-7-carbaguanosine(34) in tRNA + guanine. It functions in the pathway tRNA modification; tRNA-queuosine biosynthesis. Catalyzes the base-exchange of a guanine (G) residue with the queuine precursor 7-aminomethyl-7-deazaguanine (PreQ1) at position 34 (anticodon wobble position) in tRNAs with GU(N) anticodons (tRNA-Asp, -Asn, -His and -Tyr). Catalysis occurs through a double-displacement mechanism. The nucleophile active site attacks the C1' of nucleotide 34 to detach the guanine base from the RNA, forming a covalent enzyme-RNA intermediate. The proton acceptor active site deprotonates the incoming PreQ1, allowing a nucleophilic attack on the C1' of the ribose to form the product. After dissociation, two additional enzymatic reactions on the tRNA convert PreQ1 to queuine (Q), resulting in the hypermodified nucleoside queuosine (7-(((4,5-cis-dihydroxy-2-cyclopenten-1-yl)amino)methyl)-7-deazaguanosine). This chain is Queuine tRNA-ribosyltransferase, found in Desulforamulus reducens (strain ATCC BAA-1160 / DSM 100696 / MI-1) (Desulfotomaculum reducens).